The primary structure comprises 201 residues: Adenylyl-sulfate kinase (201 aa).

Positions 1-23 are disordered; the sequence is MALHDENVVWHSHPVTPQQREQH. 35-42 is a binding site for ATP; sequence GLSGSGKS. The active-site Phosphoserine intermediate is the Ser-109.

Belongs to the APS kinase family.

The enzyme catalyses adenosine 5'-phosphosulfate + ATP = 3'-phosphoadenylyl sulfate + ADP + H(+). Its pathway is sulfur metabolism; hydrogen sulfide biosynthesis; sulfite from sulfate: step 2/3. Catalyzes the synthesis of activated sulfate. The sequence is that of Adenylyl-sulfate kinase from Escherichia coli O6:K15:H31 (strain 536 / UPEC).